We begin with the raw amino-acid sequence, 223 residues long: Urease accessory protein UreF (223 aa).

Belongs to the UreF family. As to quaternary structure, ureD, UreF and UreG form a complex that acts as a GTP-hydrolysis-dependent molecular chaperone, activating the urease apoprotein by helping to assemble the nickel containing metallocenter of UreC. The UreE protein probably delivers the nickel.

The protein resides in the cytoplasm. Functionally, required for maturation of urease via the functional incorporation of the urease nickel metallocenter. The polypeptide is Urease accessory protein UreF (Mesorhizobium japonicum (strain LMG 29417 / CECT 9101 / MAFF 303099) (Mesorhizobium loti (strain MAFF 303099))).